A 664-amino-acid polypeptide reads, in one-letter code: CRISPR-associated DNA-binding protein Cas12m (664 aa).

The segment at 1 to 137 is recognition domain (REC1-N); that stretch reads MKRVTITIDG…AKYRELIGSD (137 aa). The interval 138–212 is recognition domain (REC2); that stretch reads EETAQMDTEI…AAKDRIRAAG (75 aa). The segment at 213–270 is recognition domain (REC1-C); the sequence is NDIENLEKDRQAAVIKAYNNSGLWWGNYNAVLESYKKARIKALKDGAELKYHRFDGSG. A wedge domain (WED) region spans residues 271-390; it reads RFTNQIQGGM…VWSVVFTFTT (120 aa). Residues 391–404 are linker; the sequence is DCPTYDQRSSTGNR. A ruvC-I region spans residues 405–618; the sequence is CGLNLGWKKQ…KNGTQIEQVS (214 aa). The target nucleic-acid binding (TNB) stretch occupies residues 618–650; that stretch reads STASSATCSACKGKMEQVDGIMWRCRECRALVD. Positions 625, 628, 642, and 645 each coordinate Zn(2+). Residues 651–664 are ruvC-II; sequence QDINAAANLFREVL. Residue Asp652 coordinates Mg(2+).

It belongs to the CRISPR-associated DNA-binding protein Cas12m family. Mg(2+) serves as cofactor. Zn(2+) is required as a cofactor.

Functionally, CRISPR (clustered regularly interspaced short palindromic repeat), is an adaptive immune system that provides protection against mobile genetic elements (viruses, transposable elements and conjugative plasmids). CRISPR clusters contain sequences complementary to antecedent mobile elements and target invading nucleic acids. CRISPR clusters are transcribed and processed into CRISPR RNA (crRNA). Recognizes a short motif in the CRISPR repeat sequences (the 5' PAM or protospacer adjacent motif, 5'-CCN-3' in this organism) to help distinguish self versus nonself, as targets within the bacterial CRISPR locus do not have PAMs. Cas12m-crRNA binds DNA in a PAM-dependent, crRNA-guided fashion. DNA-binding probably inhibits transcription, leading to gene silencing. Upon expression in E.coli as a CRISPR region preferentially binds to its associated crRNA. Probably required for pre-crRNA processing to mature crRNA. This chain is CRISPR-associated DNA-binding protein Cas12m, found in Pelobacter propionicus (strain DSM 2379 / NBRC 103807 / OttBd1).